A 454-amino-acid polypeptide reads, in one-letter code: Probable spastin homolog Bm1_53365 (454 aa).

218 to 225 (GPPGNGKT) serves as a coordination point for ATP.

This sequence belongs to the AAA ATPase family. Spastin subfamily. Homohexamer. The homohexamer is stabilized by ATP-binding. The homohexamer may adopt a ring conformation through which microtubules pass prior to being severed. Interacts with microtubules.

It localises to the cytoplasm. The protein resides in the cytoskeleton. Its subcellular location is the perinuclear region. It carries out the reaction n ATP + n H2O + a microtubule = n ADP + n phosphate + (n+1) alpha/beta tubulin heterodimers.. Severs microtubules, probably in an ATP-dependent fashion. The protein is Probable spastin homolog Bm1_53365 of Brugia malayi (Filarial nematode worm).